The following is a 354-amino-acid chain: DNA polymerase IV 2 (354 aa).

Residues 4–184 (IIHIDMDAFY…LPVKKFHGVG (181 aa)) form the UmuC domain. 2 residues coordinate Mg(2+): Asp-8 and Asp-102. Glu-103 is an active-site residue.

The protein belongs to the DNA polymerase type-Y family. Monomer. It depends on Mg(2+) as a cofactor.

The protein localises to the cytoplasm. It carries out the reaction DNA(n) + a 2'-deoxyribonucleoside 5'-triphosphate = DNA(n+1) + diphosphate. In terms of biological role, poorly processive, error-prone DNA polymerase involved in untargeted mutagenesis. Copies undamaged DNA at stalled replication forks, which arise in vivo from mismatched or misaligned primer ends. These misaligned primers can be extended by PolIV. Exhibits no 3'-5' exonuclease (proofreading) activity. May be involved in translesional synthesis, in conjunction with the beta clamp from PolIII. The chain is DNA polymerase IV 2 (dinB2) from Rhizobium meliloti (strain 1021) (Ensifer meliloti).